Reading from the N-terminus, the 312-residue chain is tRNA uridine(34) hydroxylase (312 aa).

Residues 130-225 (RGDDVVFFDG…YGEKYGNDGL (96 aa)) enclose the Rhodanese domain. Catalysis depends on Cys185, which acts as the Cysteine persulfide intermediate.

This sequence belongs to the TrhO family.

It carries out the reaction uridine(34) in tRNA + AH2 + O2 = 5-hydroxyuridine(34) in tRNA + A + H2O. In terms of biological role, catalyzes oxygen-dependent 5-hydroxyuridine (ho5U) modification at position 34 in tRNAs. This chain is tRNA uridine(34) hydroxylase, found in Corynebacterium diphtheriae (strain ATCC 700971 / NCTC 13129 / Biotype gravis).